Consider the following 249-residue polypeptide: Ribonuclease HII (249 aa).

Pro residues predominate over residues Met-1 to Pro-19. The segment at Met-1 to Val-31 is disordered. Residues Ala-52 to Pro-240 form the RNase H type-2 domain. Residues Asp-58, Glu-59, and Asp-149 each contribute to the a divalent metal cation site.

It belongs to the RNase HII family. It depends on Mn(2+) as a cofactor. Mg(2+) is required as a cofactor.

Its subcellular location is the cytoplasm. It catalyses the reaction Endonucleolytic cleavage to 5'-phosphomonoester.. In terms of biological role, endonuclease that specifically degrades the RNA of RNA-DNA hybrids. The protein is Ribonuclease HII of Xanthobacter autotrophicus (strain ATCC BAA-1158 / Py2).